We begin with the raw amino-acid sequence, 416 residues long: Probable glucan 1,3-beta-glucosidase A (416 aa).

An N-terminal signal peptide occupies residues 1–22 (MIFKFSQKALVALCLVVGLAEA). Residue Glu211 is the Proton donor of the active site. 2 disulfides stabilise this stretch: Cys291/Cys415 and Cys316/Cys342. Glu308 acts as the Nucleophile in catalysis.

It belongs to the glycosyl hydrolase 5 (cellulase A) family. In terms of assembly, monomer. It depends on Mn(2+) as a cofactor.

It is found in the secreted. The enzyme catalyses Successive hydrolysis of beta-D-glucose units from the non-reducing ends of (1-&gt;3)-beta-D-glucans, releasing alpha-glucose.. In terms of biological role, beta-glucanases participate in the metabolism of beta-glucan, the main structural component of the cell wall. It could also function biosynthetically as a transglycosylase. In Neosartorya fischeri (strain ATCC 1020 / DSM 3700 / CBS 544.65 / FGSC A1164 / JCM 1740 / NRRL 181 / WB 181) (Aspergillus fischerianus), this protein is Probable glucan 1,3-beta-glucosidase A (exgA).